Reading from the N-terminus, the 118-residue chain is MKSIRISSDYRAKRDNASCFDETFLKSFAEELYNAIIEIIKENKTIIKNEVRDELRNELATKEDILLVEERLGKKIELLNQKIEREIKLVRRDMIIINLVIILAMYAPEIIGKLLIFR.

A helical transmembrane segment spans residues 95-115 (IIINLVIILAMYAPEIIGKLL).

The protein belongs to the M.jannaschii MJ0023/MJ0349/MJ1072/MJ1074/MJ1107/MJECL16 family.

It localises to the membrane. This is an uncharacterized protein from Methanocaldococcus jannaschii (strain ATCC 43067 / DSM 2661 / JAL-1 / JCM 10045 / NBRC 100440) (Methanococcus jannaschii).